The primary structure comprises 914 residues: Inter-alpha-trypsin inhibitor heavy chain H1 (914 aa).

Residues 1–30 (MDGAAVGLRVLLGLGLVSLLTLEAMPAAWG) form the signal peptide. Positions 31–36 (LATTGR) are excised as a propeptide. The 130-residue stretch at 39–168 (AREKRQAVDT…KATFQLTYEE (130 aa)) folds into the VIT domain. A glycan (S-linked (Hex...) cysteine) is linked at Cys-62. Ser-131 bears the Phosphoserine mark. 2 N-linked (GlcNAc...) asparagine glycosylation sites follow: Asn-288 and Asn-291. One can recognise a VWFA domain in the interval 293–453 (SKNLVFVIDI…FNFLEVMSME (161 aa)). A phosphothreonine mark is found at Thr-405 and Thr-410. The N-linked (GlcNAc...) asparagine glycan is linked to Asn-591. Residue Thr-656 is glycosylated (O-linked (GalNAc...) threonine). Asp-675 is subject to Aspartate 1-(chondroitin 4-sulfate)-ester. Residues 676-914 (PHFIIYVPQK…HTDYIVPDIF (239 aa)) constitute a propeptide that is removed on maturation.

Belongs to the ITIH family. I-alpha-I plasma protease inhibitors are assembled from one or two heavy chains (HC) and one light chain, bikunin. Inter-alpha-inhibitor (I-alpha-I) is composed of ITIH1/HC1, ITIH2/HC2 and bikunin. Interacts with TNFAIP6 (via Link and CUB domains). Post-translationally, heavy chains are linked to bikunin via chondroitin 4-sulfate esterified to the alpha-carboxyl of the C-terminal aspartate after propeptide cleavage. The S-linked glycan is composed of two 6-carbon sugars, possibly Glc or Gal.

Its subcellular location is the secreted. May act as a carrier of hyaluronan in serum or as a binding protein between hyaluronan and other matrix protein, including those on cell surfaces in tissues to regulate the localization, synthesis and degradation of hyaluronan which are essential to cells undergoing biological processes. This Mesocricetus auratus (Golden hamster) protein is Inter-alpha-trypsin inhibitor heavy chain H1 (ITIH1).